Consider the following 319-residue polypeptide: Cytochrome f (319 aa).

Positions 1 to 34 (MQNRNTYEWTKKMTRLISVLVMIHIITRTSISNA) are cleaved as a signal peptide. Residues Tyr35, Cys55, Cys58, and His59 each contribute to the heme site. A helical transmembrane segment spans residues 285–305 (VKGLLLFLASVILAQIFLVLK).

It belongs to the cytochrome f family. As to quaternary structure, the 4 large subunits of the cytochrome b6-f complex are cytochrome b6, subunit IV (17 kDa polypeptide, petD), cytochrome f and the Rieske protein, while the 4 small subunits are PetG, PetL, PetM and PetN. The complex functions as a dimer. It depends on heme as a cofactor.

It localises to the plastid. Its subcellular location is the chloroplast thylakoid membrane. In terms of biological role, component of the cytochrome b6-f complex, which mediates electron transfer between photosystem II (PSII) and photosystem I (PSI), cyclic electron flow around PSI, and state transitions. This chain is Cytochrome f, found in Pinus koraiensis (Korean pine).